A 516-amino-acid polypeptide reads, in one-letter code: Maturase K (516 aa).

It belongs to the intron maturase 2 family. MatK subfamily.

It localises to the plastid. The protein resides in the chloroplast. Functionally, usually encoded in the trnK tRNA gene intron. Probably assists in splicing its own and other chloroplast group II introns. This is Maturase K from Chara connivens (Convergent stonewort).